We begin with the raw amino-acid sequence, 357 residues long: UDP-xylose transporter 3 (357 aa).

The next 10 membrane-spanning stretches (helical) occupy residues 7–27, 31–51, 75–95, 100–120, 132–152, 154–174, 194–214, 224–244, 250–270, and 280–300; these read FQLG…SIVI, ALIS…HLLV, VMGF…SLGF, FYQM…TLFF, LTIL…LNML, SVLS…TNTI, AITL…QNVF, FFIV…FLVI, VTYQ…GYVL, and ILGI…CSIE. At Ser334 the chain carries Phosphoserine.

The protein belongs to the TPT transporter family. TPT (TC 2.A.7.9) subfamily. In terms of tissue distribution, ubiquitous.

It localises to the golgi apparatus membrane. In terms of biological role, nucleotide-sugar transporter that transports UDP-xylose and UMP in a strict counter-exchange mode. This Arabidopsis thaliana (Mouse-ear cress) protein is UDP-xylose transporter 3.